The primary structure comprises 309 residues: Ras-like protein 1 (309 aa).

Residues Gly-20–Ala-25, Val-36–Thr-42, Ala-66–Gly-67, Asn-123–Asp-126, and Ser-153–Lys-155 contribute to the GTP site. An Effector region motif is present at residues Tyr-39–Tyr-47. A disordered region spans residues Lys-177 to Gly-303. Composition is skewed to polar residues over residues Asn-179–Thr-188 and Asn-209–Gly-235. The segment covering Glu-236 to Asn-245 has biased composition (basic and acidic residues). Residues Tyr-246–Asn-256 show a composition bias toward low complexity. Residues Thr-257–Asn-296 show a composition bias toward polar residues. Cys-305 is lipidated: S-palmitoyl cysteine. Cysteine methyl ester is present on Cys-306. Cys-306 carries S-farnesyl cysteine lipidation. Positions Ile-307 to Cys-309 are cleaved as a propeptide — removed in mature form.

It belongs to the small GTPase superfamily. Ras family. In terms of processing, farnesylated by RAM1-RAM2, which is required for targeting RAS1 to the cytoplasmic site of the endoplasmic reticulum, where proteolytic processing of the C-terminus by RCE1 and methylation of the resulting carboxyl group by STE14 occurs. Post-translationally, palmitoylated by the ERF2-SHR5 complex, which is required for proper plasma membrane localization of RAS1.

Its subcellular location is the cell membrane. The enzyme catalyses GTP + H2O = GDP + phosphate + H(+). Its activity is regulated as follows. Alternates between an inactive form bound to GDP and an active form bound to GTP. Activated by guanine nucleotide-exchange factor (GEF) CDC25 and inactivated by GTPase-activating proteins (GAPs) IRA1 and IRA2. Its function is as follows. The S.cerevisiae Ras proteins modulate the activity of the adenylate cyclase catalytic subunit and therefore affect the biosynthesis of cyclic-AMP. The protein is Ras-like protein 1 (RAS1) of Saccharomyces cerevisiae (strain ATCC 204508 / S288c) (Baker's yeast).